The chain runs to 308 residues: Phosphoribosylaminoimidazole-succinocarboxamide synthase (308 aa).

It belongs to the SAICAR synthetase family.

The enzyme catalyses 5-amino-1-(5-phospho-D-ribosyl)imidazole-4-carboxylate + L-aspartate + ATP = (2S)-2-[5-amino-1-(5-phospho-beta-D-ribosyl)imidazole-4-carboxamido]succinate + ADP + phosphate + 2 H(+). It participates in purine metabolism; IMP biosynthesis via de novo pathway; 5-amino-1-(5-phospho-D-ribosyl)imidazole-4-carboxamide from 5-amino-1-(5-phospho-D-ribosyl)imidazole-4-carboxylate: step 1/2. The protein is Phosphoribosylaminoimidazole-succinocarboxamide synthase of Xanthomonas euvesicatoria pv. vesicatoria (strain 85-10) (Xanthomonas campestris pv. vesicatoria).